The sequence spans 241 residues: Polyol phosphate phosphatase PYP1 (241 aa).

D9 acts as the Nucleophile in catalysis. D9, D11, and D179 together coordinate Mg(2+). D11 functions as the Proton donor in the catalytic mechanism.

This sequence belongs to the HAD-like hydrolase superfamily. Requires Mg(2+) as cofactor.

It is found in the cytoplasm. Its subcellular location is the nucleus. It carries out the reaction D-ribitol 5-phosphate + H2O = ribitol + phosphate. The enzyme catalyses D-sorbitol 6-phosphate + H2O = D-sorbitol + phosphate. The catalysed reaction is sn-glycerol 1-phosphate + H2O = glycerol + phosphate. It catalyses the reaction D-erythrose 4-phosphate + H2O = D-erythrose + phosphate. Hydrolyzes sugar alcohol (polyol) phosphates. Dephosphorylates a variety of substrates, including: sn-glycerol 1-phosphate (D-glycerol 3-phosphate), D-ribitol 5-phosphate, D-sorbitol 6-phosphate (D-glucitol 6-phosphate), and D-erythrose 4-phosphate. Prevents accumulation of toxic levels of polyol phosphates, which can impair glycolysis by inhibiting glucose-6-phosphate isomerase. The chain is Polyol phosphate phosphatase PYP1 from Saccharomyces cerevisiae (strain ATCC 204508 / S288c) (Baker's yeast).